We begin with the raw amino-acid sequence, 393 residues long: G protein-activated inward rectifier potassium channel 3 (393 aa).

The segment at 1-23 is disordered; sequence MAQENAAFSPGSEEPPRRRGRQR. Over 1–57 the chain is Cytoplasmic; sequence MAQENAAFSPGSEEPPRRRGRQRYVEKDGRCNVQQGNVRETYRYLTDLFTTLVDLQW. A helical membrane pass occupies residues 58–82; that stretch reads RLSLLFFVLAYALTWLFFGAIWWLI. Over 83–106 the chain is Extracellular; sequence AYGRGDLEHLEDTAWTPCVNNLNG. The segment at residues 107-118 is an intramembrane region (helical; Pore-forming); it reads FVAAFLFSIETE. The pore-forming intramembrane region spans 119–125; it reads TTIGYGH. Residues 120–125 carry the Selectivity filter motif; the sequence is TIGYGH. The Extracellular segment spans residues 126 to 134; the sequence is RVITDQCPE. A helical membrane pass occupies residues 135-156; sequence GIVLLLLQAILGSMVNAFMVGC. Residues 157–393 are Cytoplasmic-facing; the sequence is MFVKISQPNK…LPPPESESKV (237 aa). The tract at residues 360–393 is disordered; it reads KVEEEGAGEGAGAGDGADKEQNGCLPPPESESKV. Over residues 384–393 the composition is skewed to pro residues; sequence LPPPESESKV. The short motif at 390-393 is the PDZ-binding element; the sequence is ESKV.

Belongs to the inward rectifier-type potassium channel (TC 1.A.2.1) family. KCNJ9 subfamily. In terms of assembly, associates with KCNJ3/GIRK1 to form a G-protein-activated heteromultimer pore-forming unit. Interacts (via PDZ-binding motif) with SNX27 (via PDZ domain); the interaction is required when endocytosed to prevent degradation in lysosomes and promote recycling to the plasma membrane.

The protein localises to the membrane. The enzyme catalyses K(+)(in) = K(+)(out). In terms of biological role, this receptor is controlled by G proteins. Inward rectifier potassium channels are characterized by a greater tendency to allow potassium to flow into the cell rather than out of it. Their voltage dependence is regulated by the concentration of extracellular potassium; as external potassium is raised, the voltage range of the channel opening shifts to more positive voltages. The inward rectification is mainly due to the blockage of outward current by internal magnesium. Unable to produce channel activity when expressed alone but forms a functional channel in association with KCNJ3/GIRK1. This Rattus norvegicus (Rat) protein is G protein-activated inward rectifier potassium channel 3 (Kcnj9).